The following is a 583-amino-acid chain: Chloroplast sensor kinase, chloroplastic (583 aa).

The N-terminal 50 residues, methionine 1–valine 50, are a transit peptide targeting the chloroplast. Positions leucine 97–glutamine 277 are GAF. Cysteine 115 serves as a coordination point for [3Fe-4S] cluster. Histidine 292 is subject to Phosphohistidine; by autocatalysis. The segment at alanine 412–alanine 442 is disordered. The segment covering serine 414 to serine 431 has biased composition (low complexity). One can recognise a Histidine kinase domain in the interval serine 447 to tryptophan 583.

Belongs to the chloroplast sensor kinase protein family. Oligomerizes. [3Fe-4S] cluster is required as a cofactor. Post-translationally, autophosphorylates, possibly on His-292.

Its subcellular location is the plastid. It localises to the chloroplast stroma. The enzyme catalyses ATP + protein L-histidine = ADP + protein N-phospho-L-histidine.. Sensor kinase that senses the plastoquinone (PQ) redox state involved in stoichiometry adjustment of both photosystems (e.g. long-term adaptation via transcriptional regulation of reaction center genes of photosystems I and II) and state transitions (e.g. short-term adaptation involving reversible post-translational phosphorylation of light-harvesting complex II, LHC II), thus linking photosynthesis with gene expression in chloroplasts. Reduced PQ suppresses its autophosphorylation activity. This Phaeodactylum tricornutum (strain CCAP 1055/1) protein is Chloroplast sensor kinase, chloroplastic.